A 247-amino-acid polypeptide reads, in one-letter code: Chymase (247 aa).

The signal sequence occupies residues 1–19; that stretch reads MLLLPLPLLLFFLCSRAEA. Residues 20-21 constitute a propeptide, activation peptide; sequence GE. The region spanning 22 to 245 is the Peptidase S1 domain; it reads IIGGTECKPH…YRPWINKILQ (224 aa). A disulfide bridge connects residues C51 and C67. The Charge relay system role is filled by H66. Residues N80 and N103 are each glycosylated (N-linked (GlcNAc...) asparagine). The active-site Charge relay system is D110. Cystine bridges form between C144-C209 and C175-C188. The active-site Charge relay system is the S203.

The protein belongs to the peptidase S1 family. Granzyme subfamily.

Its subcellular location is the secreted. The protein localises to the cytoplasmic granule. The catalysed reaction is Preferential cleavage: Phe-|-Xaa &gt; Tyr-|-Xaa &gt; Trp-|-Xaa &gt; Leu-|-Xaa.. Its function is as follows. Major secreted protease of mast cells with suspected roles in vasoactive peptide generation, extracellular matrix degradation, and regulation of gland secretion. The protein is Chymase (CMA1) of Macaca fascicularis (Crab-eating macaque).